Reading from the N-terminus, the 337-residue chain is Ribosomal RNA small subunit methyltransferase H (337 aa).

S-adenosyl-L-methionine-binding positions include 33–35 (AGH), D53, D101, and Q108.

Belongs to the methyltransferase superfamily. RsmH family.

It localises to the cytoplasm. The enzyme catalyses cytidine(1402) in 16S rRNA + S-adenosyl-L-methionine = N(4)-methylcytidine(1402) in 16S rRNA + S-adenosyl-L-homocysteine + H(+). In terms of biological role, specifically methylates the N4 position of cytidine in position 1402 (C1402) of 16S rRNA. This chain is Ribosomal RNA small subunit methyltransferase H, found in Herpetosiphon aurantiacus (strain ATCC 23779 / DSM 785 / 114-95).